The sequence spans 206 residues: Guanylate kinase (206 aa).

The Guanylate kinase-like domain occupies Gly-6–Met-184. Position 13–20 (Ala-13–Ser-20) interacts with ATP.

It belongs to the guanylate kinase family.

It localises to the cytoplasm. It catalyses the reaction GMP + ATP = GDP + ADP. Essential for recycling GMP and indirectly, cGMP. The sequence is that of Guanylate kinase from Pseudoalteromonas translucida (strain TAC 125).